The primary structure comprises 312 residues: 2-phospho-L-lactate transferase (312 aa).

Asp-50 and Lys-89 together coordinate 7,8-didemethyl-8-hydroxy-5-deazariboflavin.

It belongs to the CofD family. In terms of assembly, homodimer. It depends on Mg(2+) as a cofactor.

It carries out the reaction (2S)-lactyl-2-diphospho-5'-guanosine + 7,8-didemethyl-8-hydroxy-5-deazariboflavin = oxidized coenzyme F420-0 + GMP + H(+). Its pathway is cofactor biosynthesis; coenzyme F420 biosynthesis. In terms of biological role, catalyzes the transfer of the 2-phospholactate moiety from (2S)-lactyl-2-diphospho-5'-guanosine to 7,8-didemethyl-8-hydroxy-5-deazariboflavin (FO) with the formation of oxidized coenzyme F420-0 and GMP. In Methanococcus vannielii (strain ATCC 35089 / DSM 1224 / JCM 13029 / OCM 148 / SB), this protein is 2-phospho-L-lactate transferase.